The primary structure comprises 102 residues: FGSLLGLCLITQILTGLFLAMHYTADTSSAFSSVAHICRDVNYGWLMRNIHANGASFFFICIFLHIGRGMYYGSYMFKETWNIGVILLFLVMATAFVGYVLP.

Helical transmembrane passes span Phe-1–Met-21, Trp-45–Ile-66, and Trp-81–Leu-101. The heme b site is built by His-51 and His-65.

Belongs to the cytochrome b family. As to quaternary structure, the cytochrome bc1 complex contains 3 respiratory subunits (MT-CYB, CYC1 and UQCRFS1), 2 core proteins (UQCRC1 and UQCRC2) and probably 6 low-molecular weight proteins. The cofactor is heme b.

The protein localises to the mitochondrion inner membrane. In terms of biological role, component of the ubiquinol-cytochrome c reductase complex (complex III or cytochrome b-c1 complex) that is part of the mitochondrial respiratory chain. The b-c1 complex mediates electron transfer from ubiquinol to cytochrome c. Contributes to the generation of a proton gradient across the mitochondrial membrane that is then used for ATP synthesis. This Ambystoma tigrinum (Eastern tiger salamander) protein is Cytochrome b (mt-cyb).